Here is a 685-residue protein sequence, read N- to C-terminus: Stromal interaction molecule 1 (685 aa).

The signal sequence occupies residues methionine 1 to serine 22. Residues leucine 23 to aspartate 213 are Extracellular-facing. EF-hand domains are found at residues serine 64–asparagine 97 and threonine 102–serine 126. Ca(2+) contacts are provided by aspartate 76, aspartate 78, asparagine 80, aspartate 82, and glutamate 87. N-linked (GlcNAc...) asparagine glycans are attached at residues asparagine 131 and asparagine 171. The SAM domain occupies tryptophan 132–phenylalanine 200. A helical membrane pass occupies residues phenylalanine 214–asparagine 234. The Cytoplasmic portion of the chain corresponds to arginine 235–lysine 685. Positions leucine 248–valine 442 form a coiled coil. Residue serine 257 is modified to Phosphoserine. The SOAR/CAD stretch occupies residues proline 344–valine 442. The interval aspartate 475–glutamate 483 is contributes to fast Ca(2+)-dependent inactivation of CRAC channels. Positions methionine 490–valine 499 are enriched in low complexity. The interval methionine 490 to arginine 542 is disordered. Threonine 504 carries the post-translational modification Phosphothreonine. Phosphoserine is present on serine 512. Over residues aspartate 515–arginine 532 the composition is skewed to basic and acidic residues. The residue at position 517 (threonine 517) is a Phosphothreonine. 11 positions are modified to phosphoserine: serine 519, serine 521, serine 523, serine 524, serine 567, serine 575, serine 602, serine 608, serine 618, serine 621, and serine 628. The segment at leucine 596–lysine 685 is disordered. The segment covering serine 608–serine 620 has biased composition (low complexity). The short motif at threonine 642–proline 645 is the Microtubule tip localization signal element. Acidic residues predominate over residues glutamate 655–aspartate 666. Serine 660 carries the phosphoserine modification. Phosphothreonine is present on threonine 665. Residue serine 668 is modified to Phosphoserine. The segment covering glycine 670–lysine 685 has biased composition (basic residues). Positions lysine 672–lysine 685 are required for generation of inwardly rectifying CRAC currents.

As to quaternary structure, monomer in the presence of Ca(2+); it oligomerizes in absence of Ca(2+). Forms homooligomers and heterooligomers with STIM2. Interacts with pore-forming subunits of CRAC channels, ORAI1, ORAI2 and ORAI3; this interaction is potentiated upon Ca(2+) store depletion. Interacts (via the transmembrane region and the SOAR/CAD domain) with SPPL3; the interaction promotes the binding of STIM1 to ORAI1. Interacts (via the SOAR/CAD domain) with ORAI1. Interacts with MAPRE1; probably required for targeting to the growing microtubule plus ends. Interacts with CRACR2A/EFCAB4B; the interaction is direct and takes place in absence of Ca(2+). Forms a complex with CRACR2A/EFCAB4B and ORAI1 at low concentration of Ca(2+), the complex dissociates at elevated Ca(2+) concentrations. Interacts with SARAF, promoting a slow inactivation of STIM1-dependent SOCE activity, possibly by facilitating the deoligomerization of STIM1. Interacts with EFHB; the interaction takes place upon Ca(2+)-store depletion and inhibits the association with SARAF. Interacts with ASPH (isoform 8). Interacts with SLC35G1; intracellular Ca(2+)-dependent. May interact with ATP1A1, ATP2A2, ATP2B1, ATP2B4, KPNB1 and XPO1; through SLC35G1. Interacts with TMEM203. Interacts with STIMATE, promoting STIM1 conformational switch. Interacts with TMEM178A. Interacts with CASQ1 (via C-terminal end and preferentially with the monomeric form); this interaction increases in response to a depletion of intracellular Ca(2+), decreases both STIM1 aggregation and clustering, interaction of STIM1 with ORAI1 and store-operated Ca(2+) entry (SOCE) activity. Interacts with ADCY8. In terms of processing, glycosylation is required for cell surface expression. Post-translationally, phosphorylated predominantly on Ser residues. In terms of tissue distribution, ubiquitously expressed in various human primary cells and tumor cell lines.

Its subcellular location is the cell membrane. The protein resides in the endoplasmic reticulum membrane. It localises to the cytoplasm. It is found in the cytoskeleton. The protein localises to the sarcoplasmic reticulum. Acts as a Ca(2+) sensor that gates two major inward rectifying Ca(2+) channels at the plasma membrane: Ca(2+) release-activated Ca(2+) (CRAC) channels and arachidonate-regulated Ca(2+)-selective (ARC) channels. Plays a role in mediating store-operated Ca(2+) entry (SOCE), a Ca(2+) influx following depletion of intracellular Ca(2+) stores. Upon Ca(2+) depletion, translocates from the endoplasmic reticulum to the plasma membrane where it activates CRAC channel pore-forming subunits ORA1, ORA2 and ORAI3 to generate sustained and oscillatory Ca(2+) entry. Involved in enamel formation. The polypeptide is Stromal interaction molecule 1 (STIM1) (Homo sapiens (Human)).